The primary structure comprises 353 residues: Photosystem II protein D1 (353 aa).

At threonine 2 the chain carries N-acetylthreonine. Threonine 2 bears the Phosphothreonine mark. The next 3 membrane-spanning stretches (helical) occupy residues 29–46 (YIGW…TATS), 118–133 (HFLL…EWEL), and 142–156 (WIAV…AATA). Histidine 118 serves as a coordination point for chlorophyll a. Tyrosine 126 serves as a coordination point for pheophytin a. [CaMn4O5] cluster contacts are provided by aspartate 170 and glutamate 189. A helical transmembrane segment spans residues 197-218 (FHMLGVAGVFGGSLFSAMHGSL). A chlorophyll a-binding site is contributed by histidine 198. A quinone is bound by residues histidine 215 and 264-265 (SF). Position 215 (histidine 215) interacts with Fe cation. Histidine 272 serves as a coordination point for Fe cation. The helical transmembrane segment at 274–288 (FLAAWPVVGIWFTAL) threads the bilayer. [CaMn4O5] cluster contacts are provided by histidine 332, glutamate 333, aspartate 342, and alanine 344. A propeptide spanning residues 345–353 (AVEAPSING) is cleaved from the precursor.

The protein belongs to the reaction center PufL/M/PsbA/D family. As to quaternary structure, PSII is composed of 1 copy each of membrane proteins PsbA, PsbB, PsbC, PsbD, PsbE, PsbF, PsbH, PsbI, PsbJ, PsbK, PsbL, PsbM, PsbT, PsbX, PsbY, PsbZ, Psb30/Ycf12, at least 3 peripheral proteins of the oxygen-evolving complex and a large number of cofactors. It forms dimeric complexes. Requires The D1/D2 heterodimer binds P680, chlorophylls that are the primary electron donor of PSII, and subsequent electron acceptors. It shares a non-heme iron and each subunit binds pheophytin, quinone, additional chlorophylls, carotenoids and lipids. D1 provides most of the ligands for the Mn4-Ca-O5 cluster of the oxygen-evolving complex (OEC). There is also a Cl(-1) ion associated with D1 and D2, which is required for oxygen evolution. The PSII complex binds additional chlorophylls, carotenoids and specific lipids. as cofactor. Tyr-161 forms a radical intermediate that is referred to as redox-active TyrZ, YZ or Y-Z. In terms of processing, C-terminally processed by CTPA; processing is essential to allow assembly of the oxygen-evolving complex and thus photosynthetic growth.

It is found in the plastid. The protein resides in the chloroplast thylakoid membrane. It carries out the reaction 2 a plastoquinone + 4 hnu + 2 H2O = 2 a plastoquinol + O2. In terms of biological role, photosystem II (PSII) is a light-driven water:plastoquinone oxidoreductase that uses light energy to abstract electrons from H(2)O, generating O(2) and a proton gradient subsequently used for ATP formation. It consists of a core antenna complex that captures photons, and an electron transfer chain that converts photonic excitation into a charge separation. The D1/D2 (PsbA/PsbD) reaction center heterodimer binds P680, the primary electron donor of PSII as well as several subsequent electron acceptors. This is Photosystem II protein D1 from Chloranthus spicatus (Chulantree).